A 104-amino-acid polypeptide reads, in one-letter code: MQVITLQKPSKKITYRTTYILKPSLTEEEITKEIEDYQKLLIDNGAEDIIIENTGKCRLAYLINKQNDGIYFQITYRGANTLVNILQRRMRLSINTLRYQTFKV.

This sequence belongs to the bacterial ribosomal protein bS6 family.

Its subcellular location is the plastid. It is found in the cyanelle. Binds together with bS18 to 16S ribosomal RNA. The protein is Small ribosomal subunit protein bS6c (rps6) of Cyanophora paradoxa.